The primary structure comprises 311 residues: Ribosomal RNA small subunit methyltransferase H (311 aa).

Residues 32-34, Asp-52, Phe-79, Asp-100, and Gln-107 each bind S-adenosyl-L-methionine; that span reads AGH. The segment covering 289 to 298 has biased composition (basic and acidic residues); it reads SKEELEENNR. The tract at residues 289–311 is disordered; that stretch reads SKEELEENNRARSAKLRIAEKRK. Over residues 300–311 the composition is skewed to basic residues; that stretch reads RSAKLRIAEKRK.

This sequence belongs to the methyltransferase superfamily. RsmH family.

Its subcellular location is the cytoplasm. It catalyses the reaction cytidine(1402) in 16S rRNA + S-adenosyl-L-methionine = N(4)-methylcytidine(1402) in 16S rRNA + S-adenosyl-L-homocysteine + H(+). Specifically methylates the N4 position of cytidine in position 1402 (C1402) of 16S rRNA. This is Ribosomal RNA small subunit methyltransferase H from Bacillus velezensis (strain DSM 23117 / BGSC 10A6 / LMG 26770 / FZB42) (Bacillus amyloliquefaciens subsp. plantarum).